We begin with the raw amino-acid sequence, 211 residues long: Mediator-associated protein 2 (211 aa).

A disordered region spans residues 128–211 (QQKLVGSVTN…KSKKKVKKEE (84 aa)). The segment covering 134-148 (SVTNSSKKSSNLTQS) has biased composition (low complexity). Ser173 is modified (phosphoserine). A compositionally biased stretch (low complexity) spans 189–198 (STSTVSGSSE). The segment covering 202-211 (KSKKKVKKEE) has biased composition (basic residues).

In terms of assembly, associated with the Mediator complex.

It localises to the nucleus. The polypeptide is Mediator-associated protein 2 (Arabidopsis thaliana (Mouse-ear cress)).